The sequence spans 272 residues: tRNA pseudouridine synthase A (272 aa).

D62 (nucleophile) is an active-site residue. A substrate-binding site is contributed by Y120.

Belongs to the tRNA pseudouridine synthase TruA family. Homodimer.

The enzyme catalyses uridine(38/39/40) in tRNA = pseudouridine(38/39/40) in tRNA. Its function is as follows. Formation of pseudouridine at positions 38, 39 and 40 in the anticodon stem and loop of transfer RNAs. The sequence is that of tRNA pseudouridine synthase A from Nitrosomonas europaea (strain ATCC 19718 / CIP 103999 / KCTC 2705 / NBRC 14298).